Consider the following 832-residue polypeptide: Putative beta-glucosidase (832 aa).

Aspartate 225 is an active-site residue. A PA14 domain is found at 397–556 (TGKHGYVAKF…DPETEIDYAV (160 aa)).

Belongs to the glycosyl hydrolase 3 family.

It localises to the cytoplasm. It catalyses the reaction Hydrolysis of terminal, non-reducing beta-D-glucosyl residues with release of beta-D-glucose.. In Schizosaccharomyces pombe (strain 972 / ATCC 24843) (Fission yeast), this protein is Putative beta-glucosidase.